A 29-amino-acid chain; its full sequence is Cyclotide mela-2 (29 aa).

Positions 1-29 (GKPTCGETCFKGKCYTPGCTCSYPLCKKD) form a cross-link, cyclopeptide (Gly-Asp). 3 disulfide bridges follow: cysteine 5–cysteine 19, cysteine 9–cysteine 21, and cysteine 14–cysteine 26.

In terms of processing, this is a cyclic peptide. Contains 3 disulfide bonds.

Its function is as follows. Probably participates in a plant defense mechanism (Potential). Binds to and induces leakage in phospholipd membranes, particularly ones containing 1-palmitoyl-2-oleophosphatidylethanolamine (POPE). In vitro, displays cytotoxicity against cultured cells but no hemolytic activity towards fresh erythrocytes. Not active against Gram-negative bacterium E.coli ATCC 25922 or Gram-positive bacterium S.aureus ATCC 25923 up to a concentration of 64 uM. The chain is Cyclotide mela-2 from Melicytus latifolius (Norfolk Island mahoe).